Reading from the N-terminus, the 1279-residue chain is ATP-dependent helicase/nuclease subunit A (1279 aa).

Residues 4-499 (TKWTDEQRQA…VKLFKNFRSR (496 aa)) form the UvrD-like helicase ATP-binding domain. 25 to 32 (AGAGAGKT) provides a ligand contact to ATP. In terms of domain architecture, UvrD-like helicase C-terminal spans 526–853 (EEALKVGASY…RIMSIHKSKG (328 aa)).

Belongs to the helicase family. AddA subfamily. In terms of assembly, heterodimer of AddA and AddB/RexB. The cofactor is Mg(2+).

The catalysed reaction is Couples ATP hydrolysis with the unwinding of duplex DNA by translocating in the 3'-5' direction.. The enzyme catalyses ATP + H2O = ADP + phosphate + H(+). Functionally, the heterodimer acts as both an ATP-dependent DNA helicase and an ATP-dependent, dual-direction single-stranded exonuclease. Recognizes the chi site generating a DNA molecule suitable for the initiation of homologous recombination. The AddA nuclease domain is required for chi fragment generation; this subunit has the helicase and 3' -&gt; 5' nuclease activities. This Clostridium botulinum (strain Loch Maree / Type A3) protein is ATP-dependent helicase/nuclease subunit A.